Consider the following 236-residue polypeptide: 2,3,4,5-tetrahydropyridine-2,6-dicarboxylate N-acetyltransferase (236 aa).

It belongs to the transferase hexapeptide repeat family. DapH subfamily.

The enzyme catalyses (S)-2,3,4,5-tetrahydrodipicolinate + acetyl-CoA + H2O = L-2-acetamido-6-oxoheptanedioate + CoA. The protein operates within amino-acid biosynthesis; L-lysine biosynthesis via DAP pathway; LL-2,6-diaminopimelate from (S)-tetrahydrodipicolinate (acetylase route): step 1/3. Catalyzes the transfer of an acetyl group from acetyl-CoA to tetrahydrodipicolinate. This is 2,3,4,5-tetrahydropyridine-2,6-dicarboxylate N-acetyltransferase from Clostridium botulinum (strain Alaska E43 / Type E3).